The sequence spans 785 residues: Endonuclease MutS2 (785 aa).

335–342 (GPNTGGKT) is an ATP binding site. In terms of domain architecture, Smr spans 710 to 785 (LDLRGERYED…GNGVTIVEFK (76 aa)).

This sequence belongs to the DNA mismatch repair MutS family. MutS2 subfamily. Homodimer. Binds to stalled ribosomes, contacting rRNA.

In terms of biological role, endonuclease that is involved in the suppression of homologous recombination and thus may have a key role in the control of bacterial genetic diversity. Acts as a ribosome collision sensor, splitting the ribosome into its 2 subunits. Detects stalled/collided 70S ribosomes which it binds and splits by an ATP-hydrolysis driven conformational change. Acts upstream of the ribosome quality control system (RQC), a ribosome-associated complex that mediates the extraction of incompletely synthesized nascent chains from stalled ribosomes and their subsequent degradation. Probably generates substrates for RQC. In Listeria monocytogenes serotype 4b (strain F2365), this protein is Endonuclease MutS2.